The chain runs to 452 residues: Pup--protein ligase (452 aa).

Glu9 provides a ligand contact to Mg(2+). Arg53 contributes to the ATP binding site. Tyr55 provides a ligand contact to Mg(2+). Catalysis depends on Asp57, which acts as the Proton acceptor. Position 63 (Glu63) interacts with Mg(2+). Residues Thr66 and Trp419 each contribute to the ATP site.

It belongs to the Pup ligase/Pup deamidase family. Pup-conjugating enzyme subfamily.

The catalysed reaction is ATP + [prokaryotic ubiquitin-like protein]-L-glutamate + [protein]-L-lysine = ADP + phosphate + N(6)-([prokaryotic ubiquitin-like protein]-gamma-L-glutamyl)-[protein]-L-lysine.. It participates in protein degradation; proteasomal Pup-dependent pathway. Its pathway is protein modification; protein pupylation. In terms of biological role, catalyzes the covalent attachment of the prokaryotic ubiquitin-like protein modifier Pup to the proteasomal substrate proteins, thereby targeting them for proteasomal degradation. This tagging system is termed pupylation. The ligation reaction involves the side-chain carboxylate of the C-terminal glutamate of Pup and the side-chain amino group of a substrate lysine. This chain is Pup--protein ligase, found in Mycolicibacterium gilvum (strain PYR-GCK) (Mycobacterium gilvum (strain PYR-GCK)).